Consider the following 276-residue polypeptide: Lectin-like protein At3g16530 (276 aa).

Residues 1 to 19 form the signal peptide; the sequence is MQIHKLCFLVLFLANAAFA. A legume-lectin like region spans residues 20–270; it reads VKFNFDSFDG…RHDIWSWSFE (251 aa). N-linked (GlcNAc...) asparagine glycans are attached at residues Asn79, Asn129, and Asn196.

It belongs to the leguminous lectin family.

The protein resides in the secreted. It localises to the extracellular space. The protein localises to the apoplast. In Arabidopsis thaliana (Mouse-ear cress), this protein is Lectin-like protein At3g16530.